A 621-amino-acid polypeptide reads, in one-letter code: MPPTPPPELDLLDTEPEFAEVDPTARYGRYTEVLGKGAFKTVYKAFDQLEGLEVAWNQIKVGDILRNNDDLERLRSEVRLLKTLKHKNIIKFYNSWLDKKNNNINFITEVFTSGTLRQYRIKHKKVDVRALKKWSRQILSGLVYLHSHDPPVIHRDLKCDNIFVNGNQGEVKIGDLGLATILDNARSAHSIIGTPEFMAPELYDEEYNELVDIYAFGMCLLELVTFEYPYCECSNAAQIYKKVSDGEKPSSLAKIEDPEVRFFIEKCIAKASQRLSAQELLMDPFLRDDGEKIFYPLQSNTKASDGAGSSNSSMGYKYDRDASSMAIREHTGSFAEEHPSDRYIHSTMDPQAAAGRIITVESQMKDLNTIFLKLRIADSTGHAQNIHFPFDIEADTSISVATEMVVQLDLTDQDVTAIAEMIDAEIRAHIPDWALEESVENQGDERAHSETDSSEADDETSELRNEPNATHNGFVQEHLPSGHKYWSDSPRRNIEMSHSAVEPHIGGNMPNGILKKNDTDDTVSNLGTSVDLPNPSMIDRKSGVASVSTSPQSFDDEHIEADVSERLVNLLAQQQEELNVLRRKHKADIEVILKGVPEEHREETLTRCRLKADERNRSDKP.

The Protein kinase domain occupies 28 to 286 (GRYTEVLGKG…AQELLMDPFL (259 aa)). ATP contacts are provided by residues 108 to 111 (TEVF) and lysine 158. Aspartate 175 acts as the Proton acceptor in catalysis. Disordered stretches follow at residues 438 to 490 (SVEN…SDSP), 501 to 520 (VEPHIGGNMPNGILKKNDTD), 527 to 553 (GTSVDLPNPSMIDRKSGVASVSTSPQS), and 600 to 621 (HREETLTRCRLKADERNRSDKP).

Belongs to the protein kinase superfamily. Ser/Thr protein kinase family. WNK subfamily.

The catalysed reaction is L-seryl-[protein] + ATP = O-phospho-L-seryl-[protein] + ADP + H(+). It carries out the reaction L-threonyl-[protein] + ATP = O-phospho-L-threonyl-[protein] + ADP + H(+). The sequence is that of Probable serine/threonine-protein kinase WNK2 (WNK2) from Oryza sativa subsp. japonica (Rice).